The following is a 194-amino-acid chain: Recombination protein RecR (194 aa).

The C4-type zinc finger occupies C52–C67. Positions G76–P171 constitute a Toprim domain.

This sequence belongs to the RecR family.

May play a role in DNA repair. It seems to be involved in an RecBC-independent recombinational process of DNA repair. It may act with RecF and RecO. The sequence is that of Recombination protein RecR from Vibrio campbellii (strain ATCC BAA-1116).